Here is a 200-residue protein sequence, read N- to C-terminus: Dephospho-CoA kinase (200 aa).

The DPCK domain maps to 4 to 200; sequence TIGLTGSVAT…TFIERFVNNK (197 aa). An ATP-binding site is contributed by 12–17; the sequence is ATGKST.

It belongs to the CoaE family.

It localises to the cytoplasm. The enzyme catalyses 3'-dephospho-CoA + ATP = ADP + CoA + H(+). It participates in cofactor biosynthesis; coenzyme A biosynthesis; CoA from (R)-pantothenate: step 5/5. Catalyzes the phosphorylation of the 3'-hydroxyl group of dephosphocoenzyme A to form coenzyme A. This chain is Dephospho-CoA kinase, found in Listeria innocua serovar 6a (strain ATCC BAA-680 / CLIP 11262).